The following is a 117-amino-acid chain: Inner kinetochore subunit MHF1 (117 aa).

It belongs to the TAF9 family. CENP-S/MHF1 subfamily. The MHF histone-fold complex is a heterotetramer of 2 MHF1-MHF2 heterodimers. Together with MPH1/FANCM, forms the FANCM-MHF complex. Component of the inner kinetochore constitutive centromere-associated network (CCAN).

Its function is as follows. dsDNA-binding component of a FANCM-MHF complex involved in DNA damage repair and genome maintenance. FANCM-MHF promotes gene conversion at blocked replication forks, probably by reversal of the stalled fork. Component of the kinetochore, a multiprotein complex that assembles on centromeric DNA and attaches chromosomes to spindle microtubules, mediating chromosome segregation and sister chromatid segregation during meiosis and mitosis. Component of the inner kinetochore constitutive centromere-associated network (CCAN), which serves as a structural platform for outer kinetochore assembly. The polypeptide is Inner kinetochore subunit MHF1 (Candida albicans (strain SC5314 / ATCC MYA-2876) (Yeast)).